A 464-amino-acid polypeptide reads, in one-letter code: MEIRLPDLALKRIFSFLDLFGLLQVSQVNKHWNRIADSDYLWRSLSLQRWDCSNFTNQHLGTHTWKQFFLHQRRKELRLALAQPHNFIYKVTKNIAFETELAYLSGNRLTVDEQEKSIICSVSPKQELCAWDVQEGTMIWSSPVQEFHFSNLVTLPQMHLAITMDRKKTIKVWNCQDRDALAVLPMPQPCYCMEAYLTKDGPFLMVGDAAGDIYTFTLPGLRDVSKVTAFQYGIVLLHCSPDKKWVFACGTYSRTLPQVFLTESLLRPSEGSVPLSTFLPHKLCASACWTPKVKNRITLMSQSSTGKKTEFITFDLTTKKTGGQTVIQAYEIASFQVAAHLKCPIWMGASDGYMIVFTSGPYLLLFSITGFLLQRFEDHQAAINNFWVDPCYVLTTSENSVHVYMWEEGGRHPYLRSCCHLENTWHDHTTDSCISSVMCDNASIVLRVRKVSDSSILVMYSLNT.

The F-box domain occupies 1–45 (MEIRLPDLALKRIFSFLDLFGLLQVSQVNKHWNRIADSDYLWRSL). 8 WD repeats span residues 89-132 (YKVT…CAWD), 136-174 (GTMIWSSPVQEFHFSNLVTLPQMHLAITMDRKKTIKVWN), 178-217 (RDALAVLPMPQPCYCMEAYLTKDGPFLMVGDAAGDIYTFT), 222-263 (RDVS…FLTE), 270-315 (EGSV…ITFD), 320-367 (KTGG…LLFS), 370-407 (GFLLQRFEDHQAAINNFWVDPCYVLTTSENSVHVYMWE), and 416-461 (RSCC…VMYS).

Interacts with SKP1. Interacts with CUL1. Interacts with IL22RA1. In terms of tissue distribution, ubiquitously expressed.

It functions in the pathway protein modification; protein ubiquitination. Substrate-recognition component of the SCF (SKP1-CUL1-F-box protein)-type E3 ubiquitin ligase complex. Promotes degradation of interleukin-22 receptor subunit IL22RA1 in resting and IL22-stimulated conditions by facilitating its ubiquitination. Functions as a cell growth suppressor. The polypeptide is F-box/WD repeat-containing protein 12 (FBXW12) (Homo sapiens (Human)).